The following is a 27-amino-acid chain: thr operon leader peptide (27 aa).

This sequence belongs to the thr operon leader peptide family.

In terms of biological role, this protein is involved in control of the biosynthesis of threonine. The sequence is that of thr operon leader peptide from Escherichia coli O157:H7.